A 411-amino-acid chain; its full sequence is Trigger factor (411 aa).

Residues 162–240 (EDLVVIDYTT…IKEVKRRQNI (79 aa)) enclose the PPIase FKBP-type domain.

The protein belongs to the FKBP-type PPIase family. Tig subfamily.

Its subcellular location is the cytoplasm. It catalyses the reaction [protein]-peptidylproline (omega=180) = [protein]-peptidylproline (omega=0). Involved in protein export. Acts as a chaperone by maintaining the newly synthesized protein in an open conformation. Functions as a peptidyl-prolyl cis-trans isomerase. In Thermodesulfovibrio yellowstonii (strain ATCC 51303 / DSM 11347 / YP87), this protein is Trigger factor.